A 336-amino-acid chain; its full sequence is MVMMIIIYTEPEISLFPLQDRSEELSSNVENGSCNSNEGINPETSSHWIENVVKVRKPYTVTKQREKWSEEEHDRFLEAIKLYGRGWRQIQEHIGTKTAVQIRSHAQKFFSKMAQEADSRSEGSVKAIVIPPPRPKRKPAHPYPRKSPVPYTQSPPPNLSAMEKGTKSPTSVLSSFGSEDQNNYTTSKQPFKDDSDIGSTPISSITLFGKIVLVAEESHKPSSYNDDDLKQMTCQENHYSGMLVDTNLSLGVWETFCTGSNAFGSVTEASENLEKSAEPISSSWKRLSSLEKQGSCNPVNASGFRPYKRCLSEREVTSSLTLVASDEKKSQRARIC.

One can recognise an HTH myb-type domain in the interval 60 to 114 (TVTKQREKWSEEEHDRFLEAIKLYGRGWRQIQEHIGTKTAVQIRSHAQKFFSKMA). A DNA-binding region (H-T-H motif) is located at residues 87 to 110 (WRQIQEHIGTKTAVQIRSHAQKFF). A disordered region spans residues 114 to 197 (AQEADSRSEG…KQPFKDDSDI (84 aa)). Over residues 134-144 (RPKRKPAHPYP) the composition is skewed to basic residues. Positions 145–158 (RKSPVPYTQSPPPN) are enriched in pro residues. Residues 167-189 (KSPTSVLSSFGSEDQNNYTTSKQ) show a composition bias toward polar residues.

The protein resides in the nucleus. In terms of biological role, probable transcription factor. This Arabidopsis thaliana (Mouse-ear cress) protein is Protein REVEILLE 7-like (RVE7L).